Reading from the N-terminus, the 319-residue chain is MSELFWFEKYRPRSFDEVVDLEEVKARLRQFVKAGNMPHLLFYGPPGTGKTTMALVLARELYGEYWRENTLELNASDERGINVIRERVKEFARTAPVGKAPFKLVILDEADNMTSDAQQALRRIMEIYAQNTRFILLANYVSGIIEPIQSRTVMIRFSPLPKEAVFARLRYIAENEGVKVSDDALEAIYEFTQGDMRRAINALQIAATVSKAVTEEVVAKALGMVSPRLLRETLYEAVKGSFGKAATQIYGFVADGGVGELEIIKQIHREMLRLDVQEYVKPEIAYIIAEAHYAILRGAHGLTQIYGALAKVRRLLKSV.

ATP is bound at residue 44-51; it reads GPPGTGKT.

Belongs to the activator 1 small subunits family. RfcS subfamily. In terms of assembly, heteromultimer composed of small subunits (RfcS) and large subunits (RfcL).

Its function is as follows. Part of the RFC clamp loader complex which loads the PCNA sliding clamp onto DNA. This Pyrobaculum aerophilum (strain ATCC 51768 / DSM 7523 / JCM 9630 / CIP 104966 / NBRC 100827 / IM2) protein is Replication factor C small subunit 2.